Reading from the N-terminus, the 86-residue chain is Large ribosomal subunit protein bL27 (86 aa).

Gly residues predominate over residues 1–10 (MAQKKGGGST). Positions 1–20 (MAQKKGGGSTRNGRDSESKR) are disordered.

The protein belongs to the bacterial ribosomal protein bL27 family.

This chain is Large ribosomal subunit protein bL27, found in Bordetella parapertussis (strain 12822 / ATCC BAA-587 / NCTC 13253).